Here is a 55-residue protein sequence, read N- to C-terminus: Large ribosomal subunit protein bL33c (55 aa).

It belongs to the bacterial ribosomal protein bL33 family.

The protein resides in the plastid. It is found in the chloroplast. The chain is Large ribosomal subunit protein bL33c from Emiliania huxleyi (Coccolithophore).